A 142-amino-acid chain; its full sequence is Hemoglobin subunit alpha (142 aa).

A Globin domain is found at 2–142 (VLSPADKTNV…VSTVLTSKYR (141 aa)). Serine 4 carries the phosphoserine modification. Lysine 8 carries the post-translational modification N6-succinyllysine. The residue at position 9 (threonine 9) is a Phosphothreonine. N6-succinyllysine is present on lysine 12. Lysine 17 is modified (N6-acetyllysine; alternate). Lysine 17 is subject to N6-succinyllysine; alternate. Tyrosine 25 is subject to Phosphotyrosine. Phosphoserine is present on serine 36. At lysine 41 the chain carries N6-succinyllysine. The residue at position 50 (serine 50) is a Phosphoserine. Histidine 59 serves as a coordination point for O2. Residue histidine 88 coordinates heme b. Serine 103 carries the phosphoserine modification. Threonine 109 carries the phosphothreonine modification. Serine 125 and serine 132 each carry phosphoserine. Residues threonine 135 and threonine 138 each carry the phosphothreonine modification. Serine 139 bears the Phosphoserine mark.

The protein belongs to the globin family. In terms of assembly, heterotetramer of two alpha chains and two beta chains. In terms of tissue distribution, red blood cells.

Involved in oxygen transport from the lung to the various peripheral tissues. Functionally, hemopressin acts as an antagonist peptide of the cannabinoid receptor CNR1. Hemopressin-binding efficiently blocks cannabinoid receptor CNR1 and subsequent signaling. The sequence is that of Hemoglobin subunit alpha (HBA) from Piliocolobus badius (Western red colobus).